The chain runs to 93 residues: Small ribosomal subunit protein bS20 (93 aa).

Belongs to the bacterial ribosomal protein bS20 family.

In terms of biological role, binds directly to 16S ribosomal RNA. The sequence is that of Small ribosomal subunit protein bS20 from Hydrogenobaculum sp. (strain Y04AAS1).